A 305-amino-acid chain; its full sequence is tRNA dimethylallyltransferase (305 aa).

Position 12 to 19 (12 to 19 (GPTASGKT)) interacts with ATP. 14–19 (TASGKT) is a substrate binding site. 3 interaction with substrate tRNA regions span residues 37 to 40 (DSAL), 161 to 165 (QRLAR), and 242 to 247 (RCVGYR).

This sequence belongs to the IPP transferase family. Monomer. Mg(2+) serves as cofactor.

It catalyses the reaction adenosine(37) in tRNA + dimethylallyl diphosphate = N(6)-dimethylallyladenosine(37) in tRNA + diphosphate. Catalyzes the transfer of a dimethylallyl group onto the adenine at position 37 in tRNAs that read codons beginning with uridine, leading to the formation of N6-(dimethylallyl)adenosine (i(6)A). This is tRNA dimethylallyltransferase from Psychromonas ingrahamii (strain DSM 17664 / CCUG 51855 / 37).